A 260-amino-acid chain; its full sequence is Thiazole synthase (260 aa).

K96 (schiff-base intermediate with DXP) is an active-site residue. Residues G157, 183 to 184 (AG), and 205 to 206 (AS) contribute to the 1-deoxy-D-xylulose 5-phosphate site.

The protein belongs to the ThiG family. As to quaternary structure, homotetramer. Forms heterodimers with either ThiH or ThiS.

The protein localises to the cytoplasm. It catalyses the reaction [ThiS sulfur-carrier protein]-C-terminal-Gly-aminoethanethioate + 2-iminoacetate + 1-deoxy-D-xylulose 5-phosphate = [ThiS sulfur-carrier protein]-C-terminal Gly-Gly + 2-[(2R,5Z)-2-carboxy-4-methylthiazol-5(2H)-ylidene]ethyl phosphate + 2 H2O + H(+). Its pathway is cofactor biosynthesis; thiamine diphosphate biosynthesis. Functionally, catalyzes the rearrangement of 1-deoxy-D-xylulose 5-phosphate (DXP) to produce the thiazole phosphate moiety of thiamine. Sulfur is provided by the thiocarboxylate moiety of the carrier protein ThiS. In vitro, sulfur can be provided by H(2)S. This is Thiazole synthase from Corynebacterium glutamicum (strain R).